The following is a 78-amino-acid chain: MKPDVHPTYHETTVTCTCGNTFTTRSTKENGVVNAEVCSQCHPFYTGKQKILDVGGRVEKFERRFGRRRPGEKVGGAK.

Cys-16, Cys-18, Cys-38, and Cys-41 together coordinate Zn(2+).

This sequence belongs to the bacterial ribosomal protein bL31 family. Type A subfamily. In terms of assembly, part of the 50S ribosomal subunit. Zn(2+) is required as a cofactor.

Its function is as follows. Binds the 23S rRNA. This is Large ribosomal subunit protein bL31 from Frankia casuarinae (strain DSM 45818 / CECT 9043 / HFP020203 / CcI3).